A 114-amino-acid polypeptide reads, in one-letter code: Chaperone protein YscY (114 aa).

As to quaternary structure, binds to YscX.

It is found in the cytoplasm. Required for Yop secretion. Functions probably as a chaperone which stabilizes YscX within the cell, before its secretion. This Yersinia enterocolitica protein is Chaperone protein YscY (yscY).